The primary structure comprises 372 residues: Adaptive-response sensory kinase SasA (372 aa).

In terms of domain architecture, Histidine kinase spans 147–360 (MVAHELRTPL…CFHFTVPVWQ (214 aa)). Position 150 is a phosphohistidine; by autocatalysis (histidine 150).

In terms of assembly, homooligomerizes. Interacts with KaiC. Participates in the KaiBC complex, whose core is composed of a KaiC homohexamer and 6 KaiB.

The catalysed reaction is ATP + protein L-histidine = ADP + protein N-phospho-L-histidine.. Member of the two-component regulatory system SasA/RpaA involved in genome-wide circadian gene expression. One of several clock output pathways. Participates in the Kai clock protein complex, the main circadian regulator in cyanobacteria, via its interaction with KaiC. KaiC enhances the autophosphorylation activity of SasA, which then transfers its phosphate group to RpaA to activate it. In addition to its output function, recruits fold-shifted KaiB (KaiB(fs)) to KaiC to cooperatively form the KaiB(6):KaiC(6) complex (independent of SasA kinase activity). Required for robustness of the circadian rhythm of gene expression and is involved in clock output, also required for adaptation to light/dark cycles. This is Adaptive-response sensory kinase SasA from Prochlorococcus marinus (strain MIT 9215).